We begin with the raw amino-acid sequence, 585 residues long: Probable glucomannan 4-beta-mannosyltransferase 7 (585 aa).

A helical transmembrane segment spans residues 87 to 107 (VIAPTLQVAVWVCMVMSVMLV). Aspartate 188 is a catalytic residue. 2 residues coordinate substrate: aspartate 247 and aspartate 249. Residue aspartate 341 is part of the active site. 4 helical membrane-spanning segments follow: residues 420–440 (VVAP…SVMI), 443–463 (LFIP…ITTI), 534–554 (LPEI…LIFH), and 563–583 (LYLQ…NFAC).

This sequence belongs to the glycosyltransferase 2 family. Plant cellulose synthase-like A subfamily.

It is found in the golgi apparatus membrane. It carries out the reaction GDP-mannose + (glucomannan)n = GDP + (glucomannan)n+1.. Functionally, probable mannan synthase which consists of a 4-beta-mannosyltransferase activity on mannan using GDP-mannose. The beta-1,4-mannan product is the backbone for galactomannan synthesis by galactomannan galactosyltransferase. Galactomannan is a noncellulosic polysaccharides of plant cell wall. This is Probable glucomannan 4-beta-mannosyltransferase 7 from Oryza sativa subsp. japonica (Rice).